The primary structure comprises 397 residues: MAFRTLDDIGDVRGKRVLVREDLNVPMEGAAVTDDTRLRSAAPTVAELADKGAIVLVLAHFGRPKGERNPEMSLALVTAAFRSVLGREVRFVGDCCGEEAEAAVAQLQPGDIALLENTRFHKGEEKNDPALAQAMAKLGDLYVNDAFSAAHRAHASTEGLARLLPAFAGRSMQAELEALEKALGKPEHPVAAVVGGAKVSTKLDVLKHLVARVDHLIIGGGMANTFLAARGVDVGKSLCEHDLKDTALAILDAADAADCIVHLPYDVVVAKEFKPNPPTRTVNVHEVAADEMILDVGPAAVEALGDALKTCRTLVWNGPLGAFETPPFDTATVALARTAAALTKGGSLVSVAGGGDTVAALNHAGVAGDFSFVSTAGGAFLEWMEGRELPGVKALEA.

Substrate is bound by residues 22 to 24 (DLN), R37, 60 to 63 (HFGR), R119, and R152. Residues K202, E324, and 354-357 (GGDT) each bind ATP.

The protein belongs to the phosphoglycerate kinase family. As to quaternary structure, monomer.

It is found in the cytoplasm. The enzyme catalyses (2R)-3-phosphoglycerate + ATP = (2R)-3-phospho-glyceroyl phosphate + ADP. It participates in carbohydrate degradation; glycolysis; pyruvate from D-glyceraldehyde 3-phosphate: step 2/5. The chain is Phosphoglycerate kinase from Rhizorhabdus wittichii (strain DSM 6014 / CCUG 31198 / JCM 15750 / NBRC 105917 / EY 4224 / RW1) (Sphingomonas wittichii).